Here is a 101-residue protein sequence, read N- to C-terminus: NADH-quinone oxidoreductase subunit K (101 aa).

3 helical membrane passes run leucine 4–leucine 24, isoleucine 30–phenylalanine 50, and valine 61–leucine 81.

Belongs to the complex I subunit 4L family. As to quaternary structure, NDH-1 is composed of 14 different subunits. Subunits NuoA, H, J, K, L, M, N constitute the membrane sector of the complex.

It localises to the cell inner membrane. The enzyme catalyses a quinone + NADH + 5 H(+)(in) = a quinol + NAD(+) + 4 H(+)(out). In terms of biological role, NDH-1 shuttles electrons from NADH, via FMN and iron-sulfur (Fe-S) centers, to quinones in the respiratory chain. The immediate electron acceptor for the enzyme in this species is believed to be ubiquinone. Couples the redox reaction to proton translocation (for every two electrons transferred, four hydrogen ions are translocated across the cytoplasmic membrane), and thus conserves the redox energy in a proton gradient. This is NADH-quinone oxidoreductase subunit K from Cupriavidus necator (strain ATCC 17699 / DSM 428 / KCTC 22496 / NCIMB 10442 / H16 / Stanier 337) (Ralstonia eutropha).